Reading from the N-terminus, the 557-residue chain is Urocanate hydratase (557 aa).

The disordered stretch occupies residues 1-20 (MSNPRHNEREVRSPRGDELN). Residues 52–53 (GG), Gln130, 176–178 (GMG), Glu196, Arg201, 242–243 (NA), 263–267 (QTSAH), 273–274 (YL), and Tyr322 contribute to the NAD(+) site. Residue Cys410 is part of the active site. Gly492 is an NAD(+) binding site.

Belongs to the urocanase family. Requires NAD(+) as cofactor.

The protein resides in the cytoplasm. The catalysed reaction is 4-imidazolone-5-propanoate = trans-urocanate + H2O. It participates in amino-acid degradation; L-histidine degradation into L-glutamate; N-formimidoyl-L-glutamate from L-histidine: step 2/3. Catalyzes the conversion of urocanate to 4-imidazolone-5-propionate. This chain is Urocanate hydratase, found in Brucella canis (strain ATCC 23365 / NCTC 10854 / RM-666).